Consider the following 237-residue polypeptide: RING finger protein vilya (237 aa).

Residues 21–69 (CNSCCALFCDKKHTFFLLACHHVFCERCVKVSAGRTPSDAPIFECSTCR) form an RING-type zinc finger. A disordered region spans residues 172 to 237 (MHRMAQAYRS…IHPPNNSFDL (66 aa)). A compositionally biased stretch (low complexity) spans 180 to 195 (RSRSLTSQSSSSAQRS). Over residues 221–237 (RQQITSFIHPPNNSFDL) the composition is skewed to polar residues.

In terms of assembly, may interact with itself and with narya and nenya through their RING-type zinc fingers. Expressed in nurse cell and pro-oocytes (at protein level).

The protein localises to the chromosome. Its function is as follows. Required for the formation of DNA double-strand breaks during meiosis together with narya and nenya. The polypeptide is RING finger protein vilya (Drosophila melanogaster (Fruit fly)).